Reading from the N-terminus, the 336-residue chain is Serpentine receptor class alpha-10 (336 aa).

At 1–28 the chain is on the extracellular side; it reads MGPITANSSKCATEDQMILQTSLLLRIN. A helical transmembrane segment spans residues 29 to 49; that stretch reads VIIMTIVAIITFILTYKALFI. The Cytoplasmic portion of the chain corresponds to 50 to 61; the sequence is LKIRPIFHSSTK. Residues 62-82 traverse the membrane as a helical segment; that stretch reads ILLYTSLLFVNVHAVIFMVIQ. Residues 83–107 lie on the Extracellular side of the membrane; sequence NTALIRSFTLSDKPCEIMRTTLECR. A helical transmembrane segment spans residues 108–128; that stretch reads FQNHVLIFGIAGVNFNQFGLT. Residues 129–148 are Cytoplasmic-facing; sequence VDRLLATIIPQSYSHMGALP. A helical transmembrane segment spans residues 149–169; it reads GVILSVLVVACSIAAPLIIAI. At 170-192 the chain is on the extracellular side; it reads GDPYDDIVPNCFFFPEHSAPRAN. Residues 193 to 213 form a helical membrane-spanning segment; it reads IFLVTLSTLVITSIFLNFIII. Over 214 to 243 the chain is Cytoplasmic; it reads YANKKLEKGCRTRFYVTQRYQKREALISTR. The helical transmembrane segment at 244 to 264 threads the bilayer; that stretch reads IISYIAASQFLGLTLYSTMVL. Residues 265-280 are Extracellular-facing; sequence TLRLHKSMIPISIYHN. A helical membrane pass occupies residues 281 to 301; sequence MVWWAYTVPFAAVSLPALLIY. Topologically, residues 302 to 336 are cytoplasmic; that stretch reads RINQVGSNRKRVINRITAKVETQEEHMKSLKELWA.

The protein belongs to the nematode receptor-like protein sra family. As to expression, expressed in the URX sensory neuron, the ALA interneuron and in additional interneurons, pharyngeal neurons and muscle.

The protein resides in the membrane. The sequence is that of Serpentine receptor class alpha-10 (sra-10) from Caenorhabditis elegans.